A 100-amino-acid chain; its full sequence is Replication restart protein PriB (100 aa).

The 99-residue stretch at 1-99 (MGFNNLVSLA…LRIQNIQEYK (99 aa)) folds into the SSB domain.

Belongs to the PriB family. Homodimer. Interacts with PriA and DnaT. Component of the replication restart primosome. Primosome assembly occurs via a 'hand-off' mechanism. PriA binds to replication forks, subsequently PriB then DnaT bind; DnaT then displaces ssDNA to generate the helicase loading substrate.

Involved in the restart of stalled replication forks, which reloads the replicative helicase on sites other than the origin of replication; the PriA-PriB pathway is the major replication restart pathway. During primosome assembly it facilitates complex formation between PriA and DnaT on DNA; stabilizes PriA on DNA. Stimulates the DNA unwinding activity of PriA helicase. The polypeptide is Replication restart protein PriB (Neisseria meningitidis serogroup A / serotype 4A (strain DSM 15465 / Z2491)).